Here is a 437-residue protein sequence, read N- to C-terminus: Trigger factor (437 aa).

The 86-residue stretch at 161-246 (DDQVNIDFVG…VNSVSAPVLP (86 aa)) folds into the PPIase FKBP-type domain.

It belongs to the FKBP-type PPIase family. Tig subfamily.

The protein localises to the cytoplasm. It catalyses the reaction [protein]-peptidylproline (omega=180) = [protein]-peptidylproline (omega=0). Its function is as follows. Involved in protein export. Acts as a chaperone by maintaining the newly synthesized protein in an open conformation. Functions as a peptidyl-prolyl cis-trans isomerase. This is Trigger factor from Pseudomonas putida (strain ATCC 47054 / DSM 6125 / CFBP 8728 / NCIMB 11950 / KT2440).